Here is a 68-residue protein sequence, read N- to C-terminus: Conotoxin Mr3.3 (68 aa).

The signal sequence occupies residues 1 to 19 (MSRLGVLLTICLLLFPLTA). Positions 20–51 (VPLDGDQPADRPAERLQDDISSEHHPHFDSGR) are excised as a propeptide. Residues 22-46 (LDGDQPADRPAERLQDDISSEHHPH) are disordered. A compositionally biased stretch (basic and acidic residues) spans 27–46 (PADRPAERLQDDISSEHHPH). 3 cysteine pairs are disulfide-bonded: cysteine 53–cysteine 67, cysteine 54–cysteine 63, and cysteine 59–cysteine 66. Residue proline 65 is modified to 4-hydroxyproline.

It belongs to the conotoxin M superfamily. In terms of tissue distribution, expressed by the venom duct.

The protein resides in the secreted. This chain is Conotoxin Mr3.3, found in Conus marmoreus (Marble cone).